Here is a 652-residue protein sequence, read N- to C-terminus: Phosphomethylpyrimidine synthase (652 aa).

Substrate contacts are provided by residues Asn-235, Met-264, Tyr-293, His-329, 349 to 351, 390 to 393, and Glu-429; these read SRG and DGMR. Residue His-433 participates in Zn(2+) binding. Tyr-456 lines the substrate pocket. His-497 serves as a coordination point for Zn(2+). The [4Fe-4S] cluster site is built by Cys-577, Cys-580, and Cys-585.

Belongs to the ThiC family. As to quaternary structure, homodimer. The cofactor is [4Fe-4S] cluster.

The catalysed reaction is 5-amino-1-(5-phospho-beta-D-ribosyl)imidazole + S-adenosyl-L-methionine = 4-amino-2-methyl-5-(phosphooxymethyl)pyrimidine + CO + 5'-deoxyadenosine + formate + L-methionine + 3 H(+). The protein operates within cofactor biosynthesis; thiamine diphosphate biosynthesis. Catalyzes the synthesis of the hydroxymethylpyrimidine phosphate (HMP-P) moiety of thiamine from aminoimidazole ribotide (AIR) in a radical S-adenosyl-L-methionine (SAM)-dependent reaction. The chain is Phosphomethylpyrimidine synthase from Shewanella woodyi (strain ATCC 51908 / MS32).